The primary structure comprises 107 residues: Wound-induced proteinase inhibitor 1 (107 aa).

The N-terminal stretch at 1-23 is a signal peptide; that stretch reads MESKFAHIIVFFLLATSFETLLA. A propeptide spanning residues 24 to 36 is cleaved from the precursor; the sequence is RKESDGPEVIELQ.

The protein belongs to the protease inhibitor I13 (potato type I serine protease inhibitor) family. Heterogeneous tetramers of similar chains.

In terms of biological role, inhibits both chymotrypsin and trypsin. In Solanum tuberosum (Potato), this protein is Wound-induced proteinase inhibitor 1.